A 114-amino-acid chain; its full sequence is NADH-ubiquinone oxidoreductase chain 3 (114 aa).

3 helical membrane passes run 3–23 (LITLIIMAMAMTTALYTINTY), 52–72 (IQFFLVAILFILFDLEIVLLL), and 86–106 (TILLITMLLTILTLGLLYEWL).

The protein belongs to the complex I subunit 3 family.

Its subcellular location is the mitochondrion membrane. It catalyses the reaction a ubiquinone + NADH + 5 H(+)(in) = a ubiquinol + NAD(+) + 4 H(+)(out). In terms of biological role, core subunit of the mitochondrial membrane respiratory chain NADH dehydrogenase (Complex I) that is believed to belong to the minimal assembly required for catalysis. Complex I functions in the transfer of electrons from NADH to the respiratory chain. The immediate electron acceptor for the enzyme is believed to be ubiquinone. The polypeptide is NADH-ubiquinone oxidoreductase chain 3 (MT-ND3) (Lycodon semicarinatus (Ryukyu odd-tooth snake)).